A 118-amino-acid polypeptide reads, in one-letter code: Large ribosomal subunit protein eL18 (118 aa).

This sequence belongs to the eukaryotic ribosomal protein eL18 family.

This chain is Large ribosomal subunit protein eL18, found in Sulfurisphaera tokodaii (strain DSM 16993 / JCM 10545 / NBRC 100140 / 7) (Sulfolobus tokodaii).